Consider the following 115-residue polypeptide: DNA-directed RNA polymerase subunit Rpo4 (115 aa).

Belongs to the eukaryotic RPB4 RNA polymerase subunit family. Part of the RNA polymerase complex. Forms a stalk with Rpo7 that extends from the main structure.

It localises to the cytoplasm. The catalysed reaction is RNA(n) + a ribonucleoside 5'-triphosphate = RNA(n+1) + diphosphate. Its function is as follows. DNA-dependent RNA polymerase (RNAP) catalyzes the transcription of DNA into RNA using the four ribonucleoside triphosphates as substrates. This subunit is less well bound than the others. The sequence is that of DNA-directed RNA polymerase subunit Rpo4 from Methanocaldococcus jannaschii (strain ATCC 43067 / DSM 2661 / JAL-1 / JCM 10045 / NBRC 100440) (Methanococcus jannaschii).